The primary structure comprises 239 residues: Major prion protein (239 aa).

The signal sequence occupies residues 1–15 (MLVLFVATWSDLGLC). The tract at residues 15-98 (CKKRPKPGGW…NQWNKPSKPK (84 aa)) is disordered. Residues 16 to 31 (KKRPKPGGWNTGGSRY) are interaction with ADGRG6. The interval 16-222 (KKRPKPGGWN…ESQAYYQRGS (207 aa)) is interaction with GRB2, ERI3 and SYN1. Repeat copies occupy residues 44-51 (PQSGGWGQ), 52-59 (PHGGGWGQ), 60-67 (PHGGGWGQ), 68-75 (PHGGGWGQ), and 76-83 (PHGGGWGQ). The segment at 44–83 (PQSGGWGQPHGGGWGQPHGGGWGQPHGGGWGQPHGGGWGQ) is 5 X 8 AA tandem repeats of P-H-G-G-G-W-G-Q. The segment covering 47–87 (GGWGQPHGGGWGQPHGGGWGQPHGGGWGQPHGGGWGQGGGT) has biased composition (gly residues). Cu(2+) is bound by residues H53, G54, G55, H61, G62, G63, H69, G70, G71, H77, G78, and G79. The cysteines at positions 171 and 206 are disulfide-linked. N-linked (GlcNAc...) asparagine glycosylation is found at N173 and N189. Residue S222 is the site of GPI-anchor amidated serine attachment. Positions 223-239 (SMVLFSSPPVILLISFL) are cleaved as a propeptide — removed in mature form.

The protein belongs to the prion family. As to quaternary structure, monomer and homodimer. Has a tendency to aggregate into amyloid fibrils containing a cross-beta spine, formed by a steric zipper of superposed beta-strands. Soluble oligomers may represent an intermediate stage on the path to fibril formation. Copper binding may promote oligomerization. Interacts with GRB2, APP, ERI3/PRNPIP and SYN1. Mislocalized cytosolically exposed PrP interacts with MGRN1; this interaction alters MGRN1 subcellular location and causes lysosomal enlargement. Interacts with APP. Interacts with KIAA1191. Interacts with ADGRG6.

It is found in the cell membrane. Its subcellular location is the golgi apparatus. In terms of biological role, its primary physiological function is unclear. May play a role in neuronal development and synaptic plasticity. May be required for neuronal myelin sheath maintenance. May promote myelin homeostasis through acting as an agonist for ADGRG6 receptor. May play a role in iron uptake and iron homeostasis. Soluble oligomers are toxic to cultured neuroblastoma cells and induce apoptosis (in vitro). Association with GPC1 (via its heparan sulfate chains) targets PRNP to lipid rafts. Also provides Cu(2+) or Zn(2+) for the ascorbate-mediated GPC1 deaminase degradation of its heparan sulfate side chains. This chain is Major prion protein (PRNP), found in Aotus trivirgatus (Three-striped night monkey).